Here is a 332-residue protein sequence, read N- to C-terminus: Methylthioribose-1-phosphate isomerase (332 aa).

Substrate-binding positions include 44-46 (RGA), Arg87, and Gln192. Asp233 acts as the Proton donor in catalysis. Substrate is bound at residue 243–244 (NK).

This sequence belongs to the eIF-2B alpha/beta/delta subunits family. MtnA subfamily.

The enzyme catalyses 5-(methylsulfanyl)-alpha-D-ribose 1-phosphate = 5-(methylsulfanyl)-D-ribulose 1-phosphate. Its pathway is amino-acid biosynthesis; L-methionine biosynthesis via salvage pathway; L-methionine from S-methyl-5-thio-alpha-D-ribose 1-phosphate: step 1/6. Functionally, catalyzes the interconversion of methylthioribose-1-phosphate (MTR-1-P) into methylthioribulose-1-phosphate (MTRu-1-P). This Dehalococcoides mccartyi (strain CBDB1) protein is Methylthioribose-1-phosphate isomerase.